The sequence spans 120 residues: Large ribosomal subunit protein bL20c (120 aa).

It belongs to the bacterial ribosomal protein bL20 family.

It is found in the plastid. Its function is as follows. Binds directly to 23S ribosomal RNA and is necessary for the in vitro assembly process of the 50S ribosomal subunit. It is not involved in the protein synthesizing functions of that subunit. The protein is Large ribosomal subunit protein bL20c (rpl20) of Cuscuta gronovii (Common dodder).